The primary structure comprises 130 residues: Small ribosomal subunit protein uS11 (130 aa).

The protein belongs to the universal ribosomal protein uS11 family. Part of the 30S ribosomal subunit. Interacts with proteins S7 and S18. Binds to IF-3.

Functionally, located on the platform of the 30S subunit, it bridges several disparate RNA helices of the 16S rRNA. Forms part of the Shine-Dalgarno cleft in the 70S ribosome. The protein is Small ribosomal subunit protein uS11 of Thermotoga petrophila (strain ATCC BAA-488 / DSM 13995 / JCM 10881 / RKU-1).